A 118-amino-acid polypeptide reads, in one-letter code: MARIAGVNIPDHKHVLISLTAIYGIGRTRAGLICKNAGIETDKKVRELSDEQVERLRGEVAKFVVEGDLRREVAMNIKRLMDLGSYRGMRHRRGLPVRGQRTRTNARTRKGPRRPIKK.

Positions 91 to 118 are disordered; it reads HRRGLPVRGQRTRTNARTRKGPRRPIKK.

Belongs to the universal ribosomal protein uS13 family. Part of the 30S ribosomal subunit. Forms a loose heterodimer with protein S19. Forms two bridges to the 50S subunit in the 70S ribosome.

Its function is as follows. Located at the top of the head of the 30S subunit, it contacts several helices of the 16S rRNA. In the 70S ribosome it contacts the 23S rRNA (bridge B1a) and protein L5 of the 50S subunit (bridge B1b), connecting the 2 subunits; these bridges are implicated in subunit movement. Contacts the tRNAs in the A and P-sites. The chain is Small ribosomal subunit protein uS13 from Methylococcus capsulatus (strain ATCC 33009 / NCIMB 11132 / Bath).